The chain runs to 497 residues: NAD(P)H-quinone oxidoreductase subunit 2, chloroplastic (497 aa).

The next 14 membrane-spanning stretches (helical) occupy residues 13–33 (VILPEIIVIVCLLIVLVLDLI), 37–57 (SAWLSTISLTGLVAATIALVF), 76–96 (FTISFRGIITISSALSILIST), 103–123 (GMGLAECLIFILTATVGGLFL), 129–149 (LVTVFVSLECLSLSSYLLVGY), 164–184 (LLMGGASSSIIAYGFSWLYGL), 206–226 (IAVWVALACVVVGIGFKLSAF), 240–260 (PTPVVAFFSVGSKAAALALAT), 274–294 (WHVLLELLALLSMIFGNLIAA), 311–331 (AGYLIIGIVCGNIYGYTGMIT), 332–352 (YMVTYIFMNLGAFGCVILFGL), 373–393 (AFCLSVCLLSLAGIPPLAGFF), 406–426 (GLYLLVYVALITSVISMYYYL), and 462–482 (VGIALCVFISTTLGFVINPII).

Belongs to the complex I subunit 2 family. NDH is composed of at least 16 different subunits, 5 of which are encoded in the nucleus.

The protein localises to the plastid. Its subcellular location is the chloroplast thylakoid membrane. The catalysed reaction is a plastoquinone + NADH + (n+1) H(+)(in) = a plastoquinol + NAD(+) + n H(+)(out). It catalyses the reaction a plastoquinone + NADPH + (n+1) H(+)(in) = a plastoquinol + NADP(+) + n H(+)(out). Functionally, NDH shuttles electrons from NAD(P)H:plastoquinone, via FMN and iron-sulfur (Fe-S) centers, to quinones in the photosynthetic chain and possibly in a chloroplast respiratory chain. The immediate electron acceptor for the enzyme in this species is believed to be plastoquinone. Couples the redox reaction to proton translocation, and thus conserves the redox energy in a proton gradient. In Zygnema circumcarinatum (Green alga), this protein is NAD(P)H-quinone oxidoreductase subunit 2, chloroplastic.